We begin with the raw amino-acid sequence, 647 residues long: Acetyl-coenzyme A synthetase (647 aa).

Residues 190-193 (RGGR) and Thr310 contribute to the CoA site. ATP contacts are provided by residues 386–388 (GEP), 410–415 (DTWWQT), Asp499, and Arg514. Ser522 contributes to the CoA binding site. Arg525 provides a ligand contact to ATP. The Mg(2+) site is built by Val536, His538, and Val541. Arg583 is a CoA binding site. At Lys608 the chain carries N6-acetyllysine.

This sequence belongs to the ATP-dependent AMP-binding enzyme family. Mg(2+) serves as cofactor. Post-translationally, acetylated. Deacetylation by the SIR2-homolog deacetylase activates the enzyme.

It carries out the reaction acetate + ATP + CoA = acetyl-CoA + AMP + diphosphate. Its function is as follows. Catalyzes the conversion of acetate into acetyl-CoA (AcCoA), an essential intermediate at the junction of anabolic and catabolic pathways. AcsA undergoes a two-step reaction. In the first half reaction, AcsA combines acetate with ATP to form acetyl-adenylate (AcAMP) intermediate. In the second half reaction, it can then transfer the acetyl group from AcAMP to the sulfhydryl group of CoA, forming the product AcCoA. The chain is Acetyl-coenzyme A synthetase from Xylella fastidiosa (strain 9a5c).